The primary structure comprises 215 residues: Thiopurine S-methyltransferase (215 aa).

S-adenosyl-L-methionine contacts are provided by Trp10, Leu45, Glu66, and Arg123.

Belongs to the class I-like SAM-binding methyltransferase superfamily. TPMT family.

The protein resides in the cytoplasm. It carries out the reaction S-adenosyl-L-methionine + a thiopurine = S-adenosyl-L-homocysteine + a thiopurine S-methylether.. The chain is Thiopurine S-methyltransferase from Pseudomonas putida (strain W619).